The primary structure comprises 493 residues: Cardiolipin synthase 1 (493 aa).

Helical transmembrane passes span 13 to 33 (FTII…IIIF) and 45 to 65 (WAWL…YLFF). 2 consecutive PLD phosphodiesterase domains span residues 228–255 (MNNR…GDEY) and 406–433 (ENGF…DFRS). Active-site residues include H233, K235, D240, H411, K413, and D418.

This sequence belongs to the phospholipase D family. Cardiolipin synthase subfamily.

It localises to the cell membrane. It carries out the reaction 2 a 1,2-diacyl-sn-glycero-3-phospho-(1'-sn-glycerol) = a cardiolipin + glycerol. Its function is as follows. Catalyzes the reversible phosphatidyl group transfer from one phosphatidylglycerol molecule to another to form cardiolipin (CL) (diphosphatidylglycerol) and glycerol. This is Cardiolipin synthase 1 (cls1) from Staphylococcus aureus (strain MRSA252).